Reading from the N-terminus, the 381-residue chain is Neuropeptide Y receptor type 2 (381 aa).

The segment at 1–35 (MGPIGTEADENQTVEEMKVEQYGPQTTPRGELVPD) is disordered. At 1 to 51 (MGPIGTEADENQTVEEMKVEQYGPQTTPRGELVPDPEPELIDSTKLIEVQV) the chain is on the extracellular side. A glycan (N-linked (GlcNAc...) asparagine) is linked at Asn-11. Residues 52–72 (VLILAYCSIILLGVIGNSLVI) form a helical membrane-spanning segment. Over 73–86 (HVVIKFKSMRTVTN) the chain is Cytoplasmic. A helical membrane pass occupies residues 87-107 (FFIANLAVADLVVNTLCLPFT). Residues 108–124 (LTYTLMGEWKMGPVLCH) lie on the Extracellular side of the membrane. Cys-123 and Cys-203 are disulfide-bonded. The chain crosses the membrane as a helical span at residues 125–145 (LVPYAQGLAVQVSTITLTVIA). Over 146 to 165 (LDRHRCIVYHLESKISKRIS) the chain is Cytoplasmic. A helical transmembrane segment spans residues 166 to 186 (FLIIGLAWGISALLASPLAIF). At 187 to 216 (REYSLIEIIPDFEIVACTEKWPGEEKSIYG) the chain is on the extracellular side. The chain crosses the membrane as a helical span at residues 217–237 (TVYSLSSLLILYVLPLGIISF). Over 238-268 (SYTRIWSKLKSHVSPGAANDHYHQRRQKTTK) the chain is Cytoplasmic. A helical transmembrane segment spans residues 269 to 289 (MLVCVVVVFAVSWLPLHAFQL). Over 290 to 304 (AVDIDSHVLDLKEYK) the chain is Extracellular. Residues 305-325 (LIFTVFHIIAMCSTFANPLLY) traverse the membrane as a helical segment. Over 326-381 (GWMNSNYRKAFLSAFRCEQRLDAIHSEVSVTFKAKKNLEVRKNSGPNDSFTEATNV) the chain is Cytoplasmic. The S-palmitoyl cysteine moiety is linked to residue Cys-342.

It belongs to the G-protein coupled receptor 1 family.

The protein resides in the cell membrane. Functionally, receptor for neuropeptide Y and peptide YY. The polypeptide is Neuropeptide Y receptor type 2 (NPY2R) (Macaca mulatta (Rhesus macaque)).